The chain runs to 213 residues: Cytochrome b6 (213 aa).

A helical membrane pass occupies residues 30–50; that stretch reads IFYCLGGLTLLCFIIQCLTGV. Position 33 (Cys33) interacts with heme c. Residues His84 and His98 each coordinate heme b. Transmembrane regions (helical) follow at residues 88-108, 114-134, and 184-204; these read CQLM…TGAF, LNWV…FTGY, and LHVM…FIMI. Heme b contacts are provided by His185 and His200.

The protein belongs to the cytochrome b family. PetB subfamily. As to quaternary structure, the subunits of the cytochrome bc complex are a Rieske Fe-S protein (PetC), cytochrome b6 (PetB), subunit IV (PetD), and a diheme cytochrome c (PetX). Heme b serves as cofactor. It depends on heme c as a cofactor.

The protein resides in the cell membrane. Functionally, component of the cytochrome bc complex which donates electrons to the photosynthetic reaction center. The protein is Cytochrome b6 of Heliobacterium modesticaldum (strain ATCC 51547 / Ice1).